We begin with the raw amino-acid sequence, 533 residues long: 2-isopropylmalate synthase (533 aa).

One can recognise a Pyruvate carboxyltransferase domain in the interval 8–270 (VIIFDTTLRD…YFNPFLGRPA (263 aa)). Mn(2+) is bound by residues D17, H209, H211, and N245. Positions 409-533 (RLELVQVSCG…KEKTPEMLQV (125 aa)) are regulatory domain.

It belongs to the alpha-IPM synthase/homocitrate synthase family. LeuA type 1 subfamily. In terms of assembly, homodimer. Mn(2+) serves as cofactor.

Its subcellular location is the cytoplasm. The enzyme catalyses 3-methyl-2-oxobutanoate + acetyl-CoA + H2O = (2S)-2-isopropylmalate + CoA + H(+). The protein operates within amino-acid biosynthesis; L-leucine biosynthesis; L-leucine from 3-methyl-2-oxobutanoate: step 1/4. Catalyzes the condensation of the acetyl group of acetyl-CoA with 3-methyl-2-oxobutanoate (2-ketoisovalerate) to form 3-carboxy-3-hydroxy-4-methylpentanoate (2-isopropylmalate). The chain is 2-isopropylmalate synthase from Microcystis aeruginosa.